The sequence spans 442 residues: Gamma-glutamyl phosphate reductase (442 aa).

This sequence belongs to the gamma-glutamyl phosphate reductase family.

It localises to the cytoplasm. It catalyses the reaction L-glutamate 5-semialdehyde + phosphate + NADP(+) = L-glutamyl 5-phosphate + NADPH + H(+). It participates in amino-acid biosynthesis; L-proline biosynthesis; L-glutamate 5-semialdehyde from L-glutamate: step 2/2. In terms of biological role, catalyzes the NADPH-dependent reduction of L-glutamate 5-phosphate into L-glutamate 5-semialdehyde and phosphate. The product spontaneously undergoes cyclization to form 1-pyrroline-5-carboxylate. The protein is Gamma-glutamyl phosphate reductase of Campylobacter curvus (strain 525.92).